A 170-amino-acid polypeptide reads, in one-letter code: Photosystem I assembly protein Ycf3 (170 aa).

3 TPR repeats span residues 35–68, 72–105, and 120–153; these read AFTY…EIDP, SYIL…NPFL, and GEQA…TPGN.

Belongs to the Ycf3 family.

It is found in the plastid. Its subcellular location is the chloroplast thylakoid membrane. Essential for the assembly of the photosystem I (PSI) complex. May act as a chaperone-like factor to guide the assembly of the PSI subunits. This chain is Photosystem I assembly protein Ycf3, found in Oryza nivara (Indian wild rice).